The sequence spans 265 residues: 4-hydroxy-tetrahydrodipicolinate reductase (265 aa).

NAD(+)-binding positions include 7–12 (GASGRM) and D33. R34 serves as a coordination point for NADP(+). NAD(+) is bound by residues 96–98 (GTT) and 120–123 (AANM). H153 (proton donor/acceptor) is an active-site residue. H154 serves as a coordination point for (S)-2,3,4,5-tetrahydrodipicolinate. K157 serves as the catalytic Proton donor. Residue 163–164 (GT) coordinates (S)-2,3,4,5-tetrahydrodipicolinate.

This sequence belongs to the DapB family.

It localises to the cytoplasm. It carries out the reaction (S)-2,3,4,5-tetrahydrodipicolinate + NAD(+) + H2O = (2S,4S)-4-hydroxy-2,3,4,5-tetrahydrodipicolinate + NADH + H(+). The catalysed reaction is (S)-2,3,4,5-tetrahydrodipicolinate + NADP(+) + H2O = (2S,4S)-4-hydroxy-2,3,4,5-tetrahydrodipicolinate + NADPH + H(+). It functions in the pathway amino-acid biosynthesis; L-lysine biosynthesis via DAP pathway; (S)-tetrahydrodipicolinate from L-aspartate: step 4/4. Functionally, catalyzes the conversion of 4-hydroxy-tetrahydrodipicolinate (HTPA) to tetrahydrodipicolinate. The sequence is that of 4-hydroxy-tetrahydrodipicolinate reductase from Burkholderia orbicola (strain AU 1054).